A 404-amino-acid chain; its full sequence is Cysteine desulfurase IscS (404 aa).

Pyridoxal 5'-phosphate is bound by residues 75 to 76, N155, Q183, and 203 to 205; these read AT and SSH. Position 206 is an N6-(pyridoxal phosphate)lysine (K206). A pyridoxal 5'-phosphate-binding site is contributed by T243. The active-site Cysteine persulfide intermediate is the C328. Residue C328 participates in [2Fe-2S] cluster binding.

This sequence belongs to the class-V pyridoxal-phosphate-dependent aminotransferase family. NifS/IscS subfamily. As to quaternary structure, homodimer. Forms a heterotetramer with IscU, interacts with other sulfur acceptors. Pyridoxal 5'-phosphate is required as a cofactor.

The protein localises to the cytoplasm. The enzyme catalyses (sulfur carrier)-H + L-cysteine = (sulfur carrier)-SH + L-alanine. It participates in cofactor biosynthesis; iron-sulfur cluster biosynthesis. Master enzyme that delivers sulfur to a number of partners involved in Fe-S cluster assembly, tRNA modification or cofactor biosynthesis. Catalyzes the removal of elemental sulfur atoms from cysteine to produce alanine. Functions as a sulfur delivery protein for Fe-S cluster synthesis onto IscU, an Fe-S scaffold assembly protein, as well as other S acceptor proteins. The protein is Cysteine desulfurase IscS of Haemophilus influenzae (strain PittEE).